The following is a 439-amino-acid chain: Ribosomal protein uS12 methylthiotransferase RimO (439 aa).

Positions P5–P115 constitute an MTTase N-terminal domain. Positions 14, 50, 79, 146, 150, and 153 each coordinate [4Fe-4S] cluster. The Radical SAM core domain maps to L132–D369. The region spanning Q372–D439 is the TRAM domain.

The protein belongs to the methylthiotransferase family. RimO subfamily. [4Fe-4S] cluster is required as a cofactor.

The protein localises to the cytoplasm. It catalyses the reaction L-aspartate(89)-[ribosomal protein uS12]-hydrogen + (sulfur carrier)-SH + AH2 + 2 S-adenosyl-L-methionine = 3-methylsulfanyl-L-aspartate(89)-[ribosomal protein uS12]-hydrogen + (sulfur carrier)-H + 5'-deoxyadenosine + L-methionine + A + S-adenosyl-L-homocysteine + 2 H(+). Catalyzes the methylthiolation of an aspartic acid residue of ribosomal protein uS12. This Francisella tularensis subsp. novicida (strain U112) protein is Ribosomal protein uS12 methylthiotransferase RimO.